A 1353-amino-acid polypeptide reads, in one-letter code: DNA-directed RNA polymerase subunit beta' (1353 aa).

Residues 1-117 (MSDNRLFTSV…AFQKLNDLFK (117 aa)) form a unknown region. The DNA-directed RNA polymerase subunit beta' stretch occupies residues 118-1353 (LYNHFPSISS…SELAEKTNQN (1236 aa)). Zn(2+) is bound by residues Cys-189, Cys-191, Cys-203, and Cys-206. Mg(2+) is bound by residues Asp-578, Asp-580, and Asp-582.

This sequence belongs to the RNA polymerase beta' chain family. As to quaternary structure, the RNAP catalytic core consists of 2 alpha, 1 beta, 1 beta' and 1 omega subunit. When a sigma factor is associated with the core the holoenzyme is formed, which can initiate transcription. Mg(2+) serves as cofactor. Requires Zn(2+) as cofactor.

It carries out the reaction RNA(n) + a ribonucleoside 5'-triphosphate = RNA(n+1) + diphosphate. Functionally, DNA-dependent RNA polymerase catalyzes the transcription of DNA into RNA using the four ribonucleoside triphosphates as substrates. The polypeptide is DNA-directed RNA polymerase subunit beta' (Onion yellows phytoplasma (strain OY-M)).